Consider the following 237-residue polypeptide: Chalcone--flavanone isomerase 1 (237 aa).

Residues Thr48, Asn113, and Ser190 each coordinate substrate.

This sequence belongs to the chalcone isomerase family.

The catalysed reaction is a chalcone = a flavanone.. It functions in the pathway secondary metabolite biosynthesis; flavonoid biosynthesis. Catalyzes the intramolecular cyclization of bicyclic chalcones into tricyclic (S)-flavanones. Responsible for the isomerization of 4,2',4',6'-tetrahydroxychalcone (also termed chalcone) into naringenin. The chain is Chalcone--flavanone isomerase 1 (CHI1) from Fragaria ananassa (Strawberry).